The sequence spans 437 residues: Cytochrome b (437 aa).

Residues 45–65 (WIWGIVLAFTLVLQIVTGIVL) traverse the membrane as a helical segment. Residues His-97 and His-111 each coordinate heme b. 9 helical membrane-spanning segments follow: residues 100-120 (GASLFFLAVYIHIFRGLYYGS), 129-149 (WIVGMVIYLLMMGTAFMGYVL), 156-176 (FWGATVITGLFGAIPGIGPSI), 194-214 (FFSLHYLLPFVIAALVAIHIW), 248-268 (FVIKDLFALALVLLGFFAVVA), 298-318 (FLPFYAILRAFAADVWVVILV), 330-350 (FFGVIAMFGAIAVMALAPWLD), 365-385 (MWFWFLVLDFVVLTWVGAMPT), and 391-411 (WISLIASTYWFAYFLVILPLL). Heme b is bound by residues His-198 and His-212.

Belongs to the cytochrome b family. As to quaternary structure, the main subunits of complex b-c1 are: cytochrome b, cytochrome c1 and the Rieske protein. The cofactor is heme b.

The protein localises to the cell membrane. Component of the ubiquinol-cytochrome c reductase complex (complex III or cytochrome b-c1 complex), which is a respiratory chain that generates an electrochemical potential coupled to ATP synthesis. This is Cytochrome b (petB) from Rhodobacter capsulatus (strain ATCC BAA-309 / NBRC 16581 / SB1003).